Reading from the N-terminus, the 472-residue chain is Ribosomal RNA small subunit methyltransferase F (472 aa).

Residues 123–129, Glu-147, Asp-174, and Asp-192 each bind S-adenosyl-L-methionine; that span reads AAAPGSK. Cys-245 acts as the Nucleophile in catalysis.

This sequence belongs to the class I-like SAM-binding methyltransferase superfamily. RsmB/NOP family.

The protein resides in the cytoplasm. The enzyme catalyses cytidine(1407) in 16S rRNA + S-adenosyl-L-methionine = 5-methylcytidine(1407) in 16S rRNA + S-adenosyl-L-homocysteine + H(+). Functionally, specifically methylates the cytosine at position 1407 (m5C1407) of 16S rRNA. The chain is Ribosomal RNA small subunit methyltransferase F from Vibrio vulnificus (strain CMCP6).